The sequence spans 310 residues: RING-H2 finger protein ATL60 (310 aa).

The chain crosses the membrane as a helical span at residues 24 to 44 (VLLFSIVSIFTGILFLLLLHL). An RING-type; atypical zinc finger spans residues 120 to 162 (CAVCLSDLVDGDKARVLPRCNHGFHVDCIDMWFQSHSTCPLCR). 2 disordered regions span residues 170–201 (DTTH…QDQS) and 240–260 (GNFA…RSQE). Over residues 179–201 (LPQNQNFESGHSTNQHNPSQDQS) the composition is skewed to polar residues.

Belongs to the RING-type zinc finger family. ATL subfamily.

It localises to the membrane. It carries out the reaction S-ubiquitinyl-[E2 ubiquitin-conjugating enzyme]-L-cysteine + [acceptor protein]-L-lysine = [E2 ubiquitin-conjugating enzyme]-L-cysteine + N(6)-ubiquitinyl-[acceptor protein]-L-lysine.. The protein operates within protein modification; protein ubiquitination. The sequence is that of RING-H2 finger protein ATL60 (ATL60) from Arabidopsis thaliana (Mouse-ear cress).